The sequence spans 324 residues: DNA primase small subunit PriS (324 aa).

Active-site residues include aspartate 94, aspartate 96, and aspartate 274.

It belongs to the eukaryotic-type primase small subunit family. As to quaternary structure, heterodimer of a small subunit (PriS) and a large subunit (PriL). Requires Mg(2+) as cofactor. Mn(2+) is required as a cofactor.

In terms of biological role, catalytic subunit of DNA primase, an RNA polymerase that catalyzes the synthesis of short RNA molecules used as primers for DNA polymerase during DNA replication. The small subunit contains the primase catalytic core and has DNA synthesis activity on its own. Binding to the large subunit stabilizes and modulates the activity, increasing the rate of DNA synthesis while decreasing the length of the DNA fragments, and conferring RNA synthesis capability. The DNA polymerase activity may enable DNA primase to also catalyze primer extension after primer synthesis. May also play a role in DNA repair. The sequence is that of DNA primase small subunit PriS from Methanobrevibacter smithii (strain ATCC 35061 / DSM 861 / OCM 144 / PS).